A 288-amino-acid polypeptide reads, in one-letter code: Cell division protein ZipA (288 aa).

Residue methionine 1 is a topological domain, periplasmic. Residues 2-22 (EIGLREWLIVIGIIVIAGILF) form a helical membrane-spanning segment. Residues 23–288 (DGWRRMRGGK…FERRALTQKR (266 aa)) are Cytoplasmic-facing. Composition is skewed to basic and acidic residues over residues 66–75 (KEPQLDEHDL) and 83–93 (REAREPRESGS). Positions 66–141 (KEPQLDEHDL…AKSSPAVADK (76 aa)) are disordered. A compositionally biased stretch (low complexity) spans 106 to 117 (GDLNLDLDLDGG).

Belongs to the ZipA family. As to quaternary structure, interacts with FtsZ via their C-terminal domains.

Its subcellular location is the cell inner membrane. In terms of biological role, essential cell division protein that stabilizes the FtsZ protofilaments by cross-linking them and that serves as a cytoplasmic membrane anchor for the Z ring. Also required for the recruitment to the septal ring of downstream cell division proteins. The chain is Cell division protein ZipA from Pseudomonas fluorescens (strain Pf0-1).